Consider the following 110-residue polypeptide: Cell division protein FtsB (110 aa).

Residues 1–3 are Cytoplasmic-facing; it reads MRL. The chain crosses the membrane as a helical span at residues 4–21; it reads IILCLAALVLLIQFPLWL. The Periplasmic segment spans residues 22-110; it reads GKGGWLRVWD…PPKIEPKEKR (89 aa). The stretch at 31 to 64 forms a coiled coil; it reads DLDQQVIAAQKKNDELRARNAKLNSEVQDLKEGT.

This sequence belongs to the FtsB family. Part of a complex composed of FtsB, FtsL and FtsQ.

The protein resides in the cell inner membrane. Essential cell division protein. May link together the upstream cell division proteins, which are predominantly cytoplasmic, with the downstream cell division proteins, which are predominantly periplasmic. The chain is Cell division protein FtsB from Herminiimonas arsenicoxydans.